The chain runs to 303 residues: GTPase Era (303 aa).

The 169-residue stretch at 8–176 (YCGFIAIVGR…ASIVRKHMPE (169 aa)) folds into the Era-type G domain. The segment at 16–23 (GRPNVGKS) is G1. 16-23 (GRPNVGKS) contacts GTP. Residues 42 to 46 (QTTRH) form a G2 region. Positions 63–66 (DTPG) are G3. GTP contacts are provided by residues 63 to 67 (DTPGL) and 125 to 128 (NKVD). Positions 125-128 (NKVD) are G4. The tract at residues 155-157 (ISA) is G5. Positions 207–284 (LGEELPYSVT…HLELWVKVKS (78 aa)) constitute a KH type-2 domain.

This sequence belongs to the TRAFAC class TrmE-Era-EngA-EngB-Septin-like GTPase superfamily. Era GTPase family. As to quaternary structure, monomer.

The protein resides in the cytoplasm. The protein localises to the cell inner membrane. Its function is as follows. An essential GTPase that binds both GDP and GTP, with rapid nucleotide exchange. Plays a role in 16S rRNA processing and 30S ribosomal subunit biogenesis and possibly also in cell cycle regulation and energy metabolism. The polypeptide is GTPase Era (Yersinia pseudotuberculosis serotype O:1b (strain IP 31758)).